The chain runs to 233 residues: 7-cyano-7-deazaguanine synthase (233 aa).

18–28 (FSGGQDSTTCL) serves as a coordination point for ATP. Residues Cys-198, Cys-213, Cys-216, and Cys-219 each contribute to the Zn(2+) site.

Belongs to the QueC family. It depends on Zn(2+) as a cofactor.

The enzyme catalyses 7-carboxy-7-deazaguanine + NH4(+) + ATP = 7-cyano-7-deazaguanine + ADP + phosphate + H2O + H(+). It participates in purine metabolism; 7-cyano-7-deazaguanine biosynthesis. Catalyzes the ATP-dependent conversion of 7-carboxy-7-deazaguanine (CDG) to 7-cyano-7-deazaguanine (preQ(0)). The sequence is that of 7-cyano-7-deazaguanine synthase from Wolinella succinogenes (strain ATCC 29543 / DSM 1740 / CCUG 13145 / JCM 31913 / LMG 7466 / NCTC 11488 / FDC 602W) (Vibrio succinogenes).